The chain runs to 369 residues: Histidinol-phosphate aminotransferase 2 (369 aa).

N6-(pyridoxal phosphate)lysine is present on K231.

Belongs to the class-II pyridoxal-phosphate-dependent aminotransferase family. Histidinol-phosphate aminotransferase subfamily. As to quaternary structure, homodimer. Requires pyridoxal 5'-phosphate as cofactor.

It carries out the reaction L-histidinol phosphate + 2-oxoglutarate = 3-(imidazol-4-yl)-2-oxopropyl phosphate + L-glutamate. Its pathway is amino-acid biosynthesis; L-histidine biosynthesis; L-histidine from 5-phospho-alpha-D-ribose 1-diphosphate: step 7/9. This is Histidinol-phosphate aminotransferase 2 from Legionella pneumophila (strain Lens).